Here is a 310-residue protein sequence, read N- to C-terminus: Putative olfactory receptor 7A2 (310 aa).

Over 1-26 the chain is Extracellular; the sequence is MVKAGNETQISEFLLLGFSEKQELQP. N-linked (GlcNAc...) asparagine glycosylation is present at Asn6. The helical transmembrane segment at 27-47 threads the bilayer; that stretch reads FLFGLFLSMYLVTVLGNLLII. The Cytoplasmic segment spans residues 48–55; that stretch reads LAAISDSC. The chain crosses the membrane as a helical span at residues 56-76; sequence LHTPMYFFLSNLSFVDICFAS. The Extracellular segment spans residues 77-100; it reads TMVPKMLVNIQTQSKVITYAGCIT. Cys98 and Cys190 form a disulfide bridge. The chain crosses the membrane as a helical span at residues 101–121; it reads QMCFFVLFIVLDSLLLTVMAY. Topologically, residues 122–140 are cytoplasmic; it reads DQFVAICHPLHYTVIMSPQ. A helical transmembrane segment spans residues 141 to 161; that stretch reads LCGLLVLVSWIMSVLNSMLQS. Residues 162–198 are Extracellular-facing; sequence LVTLQLSFCTDLEIPHFFCELNEMIHLACSDTFVNNM. The chain crosses the membrane as a helical span at residues 199 to 218; that stretch reads VMHFAAVLLDGGPLVGILYS. Topologically, residues 219 to 238 are cytoplasmic; that stretch reads YCRIVSSIRAISSTQGKYKA. A helical transmembrane segment spans residues 239–259; that stretch reads LSTCASHLSVVSIFYGTGLGV. Topologically, residues 260–272 are extracellular; the sequence is YLSSTMTQNLHST. A helical membrane pass occupies residues 273–293; that stretch reads AVASVMYTVVTPMLNPFIYSL. Over 294–310 the chain is Cytoplasmic; that stretch reads RNKDIKGALTQFFRGKQ.

Belongs to the G-protein coupled receptor 1 family.

Its subcellular location is the cell membrane. In terms of biological role, odorant receptor. The chain is Putative olfactory receptor 7A2 (OR7A2P) from Homo sapiens (Human).